A 280-amino-acid chain; its full sequence is Borealin (280 aa).

The span at 140-153 (KVAAKKPSTARRTR) shows a compositional bias: basic residues. Residues 140–187 (KVAAKKPSTARRTRASVGNVANTSKRTSKRGRATPSASKQAETSLLGY) form a disordered region.

This sequence belongs to the borealin family. Component of the CPC at least composed of survivin/birc5, incenp, cdca8/borealin and/or cdca9/dasra-A, and aurkb/aurora-B. Interacts with incenp (via N-terminus).

It localises to the nucleus. It is found in the chromosome. Its subcellular location is the centromere. The protein localises to the cytoplasm. The protein resides in the cytoskeleton. It localises to the spindle. Its function is as follows. Component of the chromosomal passenger complex (CPC), a complex that acts as a key regulator of mitosis. The CPC complex has essential functions at the centromere in ensuring correct chromosome alignment and segregation and is required for chromatin-induced microtubule stabilization and spindle assembly. Contributes to CPC function by facilitating loading of the CPC onto chromosomes. This Xenopus laevis (African clawed frog) protein is Borealin (cdca8).